Reading from the N-terminus, the 238-residue chain is DNA repair protein RecO (238 aa).

It belongs to the RecO family.

Its function is as follows. Involved in DNA repair and RecF pathway recombination. This is DNA repair protein RecO from Aliivibrio fischeri (strain ATCC 700601 / ES114) (Vibrio fischeri).